The primary structure comprises 102 residues: Parathymosin (102 aa).

The disordered stretch occupies residues 1-102 (MSEKSVEAAA…RQKTENGASA (102 aa)). Ser2 is modified (N-acetylserine). A Phosphoserine modification is found at Ser2. Lys4 carries the N6-acetyllysine modification. 2 positions are modified to phosphoserine: Ser5 and Ser13. Over residues 13–37 (SAKDLKEKKDKVEEKAGRKERKKEV) the composition is skewed to basic and acidic residues. The residue at position 15 (Lys15) is an N6-acetyllysine. Residues 38 to 75 (VEEEENGAEEEEEETAEDGEDDDEGDEEDEEEEEEEDE) show a composition bias toward acidic residues. Residue Thr52 is modified to Phosphothreonine. N6-acetyllysine is present on Lys92.

It belongs to the pro/parathymosin family.

Its function is as follows. Parathymosin may mediate immune function by blocking the effect of prothymosin alpha which confers resistance to certain opportunistic infections. The polypeptide is Parathymosin (Ptms) (Rattus norvegicus (Rat)).